The primary structure comprises 301 residues: Aspartate carbamoyltransferase catalytic subunit (301 aa).

Carbamoyl phosphate contacts are provided by Arg46 and Thr47. Lys74 provides a ligand contact to L-aspartate. Carbamoyl phosphate contacts are provided by Arg96, His124, and Gln127. The L-aspartate site is built by Arg157 and Arg208. Residues Ala249 and Pro250 each coordinate carbamoyl phosphate.

This sequence belongs to the aspartate/ornithine carbamoyltransferase superfamily. ATCase family. In terms of assembly, heterododecamer (2C3:3R2) of six catalytic PyrB chains organized as two trimers (C3), and six regulatory PyrI chains organized as three dimers (R2).

It catalyses the reaction carbamoyl phosphate + L-aspartate = N-carbamoyl-L-aspartate + phosphate + H(+). Its pathway is pyrimidine metabolism; UMP biosynthesis via de novo pathway; (S)-dihydroorotate from bicarbonate: step 2/3. Functionally, catalyzes the condensation of carbamoyl phosphate and aspartate to form carbamoyl aspartate and inorganic phosphate, the committed step in the de novo pyrimidine nucleotide biosynthesis pathway. In Bacillus cereus (strain ATCC 14579 / DSM 31 / CCUG 7414 / JCM 2152 / NBRC 15305 / NCIMB 9373 / NCTC 2599 / NRRL B-3711), this protein is Aspartate carbamoyltransferase catalytic subunit.